Here is a 235-residue protein sequence, read N- to C-terminus: 2-C-methyl-D-erythritol 4-phosphate cytidylyltransferase (235 aa).

This sequence belongs to the IspD/TarI cytidylyltransferase family. IspD subfamily.

The catalysed reaction is 2-C-methyl-D-erythritol 4-phosphate + CTP + H(+) = 4-CDP-2-C-methyl-D-erythritol + diphosphate. The protein operates within isoprenoid biosynthesis; isopentenyl diphosphate biosynthesis via DXP pathway; isopentenyl diphosphate from 1-deoxy-D-xylulose 5-phosphate: step 2/6. Catalyzes the formation of 4-diphosphocytidyl-2-C-methyl-D-erythritol from CTP and 2-C-methyl-D-erythritol 4-phosphate (MEP). The polypeptide is 2-C-methyl-D-erythritol 4-phosphate cytidylyltransferase (Pseudomonas putida (strain GB-1)).